Consider the following 353-residue polypeptide: MTIALGKFTKDEKDLFDIMDDWLRRDRFVFVGWSGLLLFPCAYFALGGWFTGTTFVTSWYTHGLASSYLEGCNFLTAAVSTPANSLAHSLLLLWGPEAQGDFTRWCQLGGLWAFVALHGAFALIGFMLRQFELSRSVQLRPYNAIAFSGPIAVFVSVFLIYPLGQSGWFFAPSFGVAAIFRFILFFQGFHNWTLNPFHMMGVAGVLGAALLCAIHGATVENTLFEDGDGANTFRAFNPTQAEETYSMVTANRFWSQIFGVAFSNKRWLHFFMLFVPVTGLWMSALGVVGLALNLRAYDFVSQEIRAAEDPEFETFYTKNILLNEGIRAWMAAQDQPHENLIFPEEVLPRGNAL.

Residue Thr2 is modified to N-acetylthreonine. Thr2 carries the post-translational modification Phosphothreonine. The chain crosses the membrane as a helical span at residues 41–61 (CAYFALGGWFTGTTFVTSWYT). A chlorophyll a-binding site is contributed by His118. Residues 125–141 (GFMLRQFELSRSVQLRP) traverse the membrane as a helical segment. Gln130 and Asn143 together coordinate pheophytin a. Residues 153 to 166 (VFVSVFLIYPLGQS) traverse the membrane as a helical segment. His198 contributes to the chlorophyll a binding site. A helical transmembrane segment spans residues 208–228 (AALLCAIHGATVENTLFEDGD). Positions 215 and 262 each coordinate a plastoquinone. His215 contributes to the Fe cation binding site. His269 is a Fe cation binding site. A helical transmembrane segment spans residues 279 to 295 (GLWMSALGVVGLALNLR).

The protein belongs to the reaction center PufL/M/PsbA/D family. PSII is composed of 1 copy each of membrane proteins PsbA, PsbB, PsbC, PsbD, PsbE, PsbF, PsbH, PsbI, PsbJ, PsbK, PsbL, PsbM, PsbT, PsbX, PsbY, PsbZ, Psb30/Ycf12, at least 3 peripheral proteins of the oxygen-evolving complex and a large number of cofactors. It forms dimeric complexes. The D1/D2 heterodimer binds P680, chlorophylls that are the primary electron donor of PSII, and subsequent electron acceptors. It shares a non-heme iron and each subunit binds pheophytin, quinone, additional chlorophylls, carotenoids and lipids. There is also a Cl(-1) ion associated with D1 and D2, which is required for oxygen evolution. The PSII complex binds additional chlorophylls, carotenoids and specific lipids. is required as a cofactor.

It localises to the plastid. The protein localises to the chloroplast thylakoid membrane. The catalysed reaction is 2 a plastoquinone + 4 hnu + 2 H2O = 2 a plastoquinol + O2. Its function is as follows. Photosystem II (PSII) is a light-driven water:plastoquinone oxidoreductase that uses light energy to abstract electrons from H(2)O, generating O(2) and a proton gradient subsequently used for ATP formation. It consists of a core antenna complex that captures photons, and an electron transfer chain that converts photonic excitation into a charge separation. The D1/D2 (PsbA/PsbD) reaction center heterodimer binds P680, the primary electron donor of PSII as well as several subsequent electron acceptors. D2 is needed for assembly of a stable PSII complex. This Arabis hirsuta (Hairy rock-cress) protein is Photosystem II D2 protein.